A 378-amino-acid polypeptide reads, in one-letter code: Succinyl-diaminopimelate desuccinylase (378 aa).

Residue His68 coordinates Zn(2+). Residue Asp70 is part of the active site. Asp101 lines the Zn(2+) pocket. Glu135 functions as the Proton acceptor in the catalytic mechanism. The Zn(2+) site is built by Glu136, Glu164, and His350.

Belongs to the peptidase M20A family. DapE subfamily. As to quaternary structure, homodimer. The cofactor is Zn(2+). Requires Co(2+) as cofactor.

It carries out the reaction N-succinyl-(2S,6S)-2,6-diaminopimelate + H2O = (2S,6S)-2,6-diaminopimelate + succinate. Its pathway is amino-acid biosynthesis; L-lysine biosynthesis via DAP pathway; LL-2,6-diaminopimelate from (S)-tetrahydrodipicolinate (succinylase route): step 3/3. Functionally, catalyzes the hydrolysis of N-succinyl-L,L-diaminopimelic acid (SDAP), forming succinate and LL-2,6-diaminopimelate (DAP), an intermediate involved in the bacterial biosynthesis of lysine and meso-diaminopimelic acid, an essential component of bacterial cell walls. The polypeptide is Succinyl-diaminopimelate desuccinylase (Vibrio parahaemolyticus serotype O3:K6 (strain RIMD 2210633)).